A 455-amino-acid polypeptide reads, in one-letter code: Enolase (455 aa).

Residue glutamine 166 participates in (2R)-2-phosphoglycerate binding. Glutamate 208 (proton donor) is an active-site residue. Aspartate 249, glutamate 311, and aspartate 338 together coordinate Mg(2+). 4 residues coordinate (2R)-2-phosphoglycerate: lysine 363, arginine 392, serine 393, and lysine 414. Lysine 363 acts as the Proton acceptor in catalysis.

Belongs to the enolase family. Requires Mg(2+) as cofactor.

It is found in the cytoplasm. It localises to the secreted. The protein resides in the cell surface. It carries out the reaction (2R)-2-phosphoglycerate = phosphoenolpyruvate + H2O. It functions in the pathway carbohydrate degradation; glycolysis; pyruvate from D-glyceraldehyde 3-phosphate: step 4/5. In terms of biological role, catalyzes the reversible conversion of 2-phosphoglycerate (2-PG) into phosphoenolpyruvate (PEP). It is essential for the degradation of carbohydrates via glycolysis. The protein is Enolase of Mycoplasma mobile (strain ATCC 43663 / 163K / NCTC 11711) (Mesomycoplasma mobile).